Consider the following 234-residue polypeptide: uncharacterized protein (234 aa).

Residues 103–211 (LAKKVPFVVC…SHIKIGKSFL (109 aa)) form the tRNA-binding domain.

This is an uncharacterized protein from Mycoplasma pneumoniae (strain ATCC 29342 / M129 / Subtype 1) (Mycoplasmoides pneumoniae).